The primary structure comprises 537 residues: ESX-2 secretion system protein EccE2 (537 aa).

A helical membrane pass occupies residues 31–51; that stretch reads ALGGQLGAVMAVVVGVALVFV.

The protein belongs to the EccE family. Could be part of the ESX-2 / type VII secretion system (T7SS), which is composed of cytosolic and membrane components.

The protein resides in the cell membrane. This chain is ESX-2 secretion system protein EccE2 (eccE2), found in Mycobacterium tuberculosis (strain CDC 1551 / Oshkosh).